The chain runs to 415 residues: Arrestin domain-containing protein 4 (415 aa).

Short sequence motifs (PPxY motif) lie at residues 347–350 (PPNY) and 392–395 (PPLY).

This sequence belongs to the arrestin family. Interacts with ADRB2. Interacts (via PPxY motifs) with ITCH, NEDD4L and WWP2. Interacts with AVPR2. Identified in a complex containing at least ARRDC4, AVPR2 and HGS. Interacts with SLC11A2; controls the incorporation of SLC11A2 into extracellular vesicles through an ubiquitination-dependent mechanism. Interacts with TRIM65.

Its subcellular location is the early endosome. It is found in the cell membrane. It localises to the cytoplasmic vesicle. In terms of biological role, functions as an adapter recruiting ubiquitin-protein ligases to their specific substrates. Plays a role in endocytosis of activated G protein-coupled receptors (GPCRs). Through an ubiquitination-dependent mechanism also plays a role in the incorporation of SLC11A2 into extracellular vesicles. May play a role in glucose uptake. Participates in innate immune response by promoting IFIH1/MDA5 activation through interaction with TRIM65. This is Arrestin domain-containing protein 4 from Mus musculus (Mouse).